Reading from the N-terminus, the 100-residue chain is Tuberoinfundibular peptide of 39 residues (100 aa).

An N-terminal signal peptide occupies residues 1–30; the sequence is METCQMSRSPRERLLLLLLLLLLVPWGTGP. Residues 31 to 59 constitute a propeptide that is removed on maturation; that stretch reads ASGVALPLAGVFSLRAPGRAWAGLGSPLS.

Belongs to the parathyroid hormone family. As to quaternary structure, ligand of high affinity for the PTH2 receptor (PTH2R). In terms of tissue distribution, expressed in testis and, less abundantly, in liver and kidney. Expressed in seminiferous tubuli and several brain regions, including nucleus ruber, caudal paralemniscal nucleus, nucleus centralis pontis, and nucleus subparafascicularis thalami. Expressed in neurons of cerebral cortex and subcortical areas. Expressed in Purkinje cells of cerebellum.

The protein resides in the secreted. Plays a role as a potent and selective agonist of PTH2R resulting in adenyl cyclase activation and intracellular calcium levels elevation. Induces protein kinase C beta activation, recruitment of beta-arrestin and PTH2R internalization. May inhibit cell proliferation via its action of PTH2R activation. Neuropeptide which may also have a role in spermatogenesis. May activate nociceptors and nociceptive circuits. The polypeptide is Tuberoinfundibular peptide of 39 residues (Pth2) (Mus musculus (Mouse)).